We begin with the raw amino-acid sequence, 1459 residues long: DNA-binding protein RFX7 (1459 aa).

The disordered stretch occupies residues 1-27 (MAEEQQQPPPQQLDAPQQLPLSAPNPG). Residues 12–21 (QLDAPQQLPL) show a composition bias toward low complexity. The segment at residues 108 to 183 (AFSWIRNTLE…YCYSGLRKKA (76 aa)) is a DNA-binding region (RFX-type winged-helix). Positions 188–193 (PTLPNL) match the PxLPxI/L motif; mediates interaction with ANKRA2 and RFXANK motif. Disordered stretches follow at residues 303–347 (AKQQ…LPNG), 404–428 (SVKQ…ARHR), 482–590 (PSNS…GVTE), 634–659 (FTST…SPRK), 688–716 (GQKP…AQIP), and 918–1016 (SVTP…VPPS). 2 stretches are compositionally biased toward polar residues: residues 404 to 416 (SVKQ…QNVP) and 482 to 502 (PSNS…TGTT). Residues 521–534 (SPGSRASSTGGTSA) are compositionally biased toward low complexity. Basic and acidic residues predominate over residues 537–549 (VKMEPEGSSDEHP). Polar residues-rich tracts occupy residues 562–578 (PLTT…NTDG), 634–645 (FTSTSSPSNGDS), and 706–716 (TESSTAGAQIP). A compositionally biased stretch (pro residues) spans 947-963 (TPTPTPTPTPTPTPTPT). Polar residues predominate over residues 971 to 1009 (GSQSLSRESPCSRLAQTTPVDSALGSSRHTPIGTPHSNC).

The protein belongs to the RFX family. As to quaternary structure, interacts (via PxLPxI/L motif) with RFXANK (via ankyrin repeats). Interacts (via PxLPxI/L motif) with ANKRA2 (via ankyrin repeats). In terms of tissue distribution, expressed in spleen and lymph node and to a lower extend in brain (at protein level). Expressed in lymphoid organs and lymphoid cell subsets. Expressed throughout natural killer (NK) cell maturation.

It is found in the nucleus. Its function is as follows. Transcription factor. Acts as a transcriptional activator by binding to promoter regions of target genes, such as Rec8, Mxd4 and Ddit4. Plays a role in natural killer (NK) cell maintenance and immunity. May play a role in the process of ciliogenesis in the neural tube and neural tube closure. The chain is DNA-binding protein RFX7 from Mus musculus (Mouse).